The primary structure comprises 218 residues: Dual specificity protein phosphatase TpbA (218 aa).

An N-terminal signal peptide occupies residues 1 to 28 (MHRSPLAWLRLLLAAVLGAFLLGGPLHA). The Tyrosine-protein phosphatase domain occupies 44–188 (DPSINLYRMS…YVRGADVDGL (145 aa)). The Proton donor/acceptor role is filled by Asp105. Cys132 (phosphocysteine intermediate) is an active-site residue.

It belongs to the protein-tyrosine phosphatase family.

It is found in the periplasm. It catalyses the reaction O-phospho-L-tyrosyl-[protein] + H2O = L-tyrosyl-[protein] + phosphate. The catalysed reaction is O-phospho-L-threonyl-[protein] + H2O = L-threonyl-[protein] + phosphate. The enzyme catalyses O-phospho-L-seryl-[protein] + H2O = L-seryl-[protein] + phosphate. Phosphatase that regulates diverse phenotypes in P.aeruginosa via regulation of the concentration of cellular c-di-GMP. Acts by dephosphorylating the membrane-anchored diguanylate cyclase TpbB at tyrosine and serine/threonine sites, leading to inactivation of TpbB and reduced c-di-GMP production. In vitro shows phosphatase activity toward p-nitrophenyl phosphate (pNPP) and tyrosine phosphopeptides. Can efficiently dephosphorylate two phosphorylated peptides derived from the periplasmic domain of TpbB, with a strong preference for Tyr-48 over Tyr-62. The chain is Dual specificity protein phosphatase TpbA from Pseudomonas aeruginosa (strain ATCC 15692 / DSM 22644 / CIP 104116 / JCM 14847 / LMG 12228 / 1C / PRS 101 / PAO1).